The primary structure comprises 346 residues: D-alanine--D-alanine ligase (346 aa).

One can recognise an ATP-grasp domain in the interval 133 to 326 (KFLAQKAGVK…LANSLPKERE (194 aa)). 159–209 (YPIILKPARLGSSIGVSVVHDDSELAYAKDVAFEFDKDVLVEPFIKGVKEY) provides a ligand contact to ATP. Mg(2+) is bound by residues aspartate 282, glutamate 294, and asparagine 296.

The protein belongs to the D-alanine--D-alanine ligase family. Requires Mg(2+) as cofactor. Mn(2+) is required as a cofactor.

Its subcellular location is the cytoplasm. The catalysed reaction is 2 D-alanine + ATP = D-alanyl-D-alanine + ADP + phosphate + H(+). The protein operates within cell wall biogenesis; peptidoglycan biosynthesis. Functionally, cell wall formation. The sequence is that of D-alanine--D-alanine ligase from Campylobacter concisus (strain 13826).